Here is a 640-residue protein sequence, read N- to C-terminus: MPQPSVSGMDPPFGDAFRSHTFSEQTLMSTDLLANSSDPDFMYELDREMNYQQNPRDNFLSLEDCKDIENLETFTDVLDNEDALTSNWEQWDTYCEDLTKYTKLTSCDIWGTKEVDYLGLDDFSSPYQDEEVISKTPTLAQLNSEDSQSVSDSLYYPDSLFSVKQNPLPPSSFPSKKITNRAAAPVCSSKTLQAEVPSSDCVQKASKPTSSTQIMVKTNMYHNEKVNFHVECKDYVKKAKVKINPVQQGRPLLSQVHIDAAKENTCYCGAVAKRQERRGVEPHQGRGTPALPFKETQELLLSPLTQDSPGLVATAESGSLSASTSVSDSSQKKEEHNYSLFVSDNMREQPTKYSPEDDEDDEDEFDDEDHDEGFGSEHELSENEEEEEEEEDYEDDRDDDISDTFSEPGYENDSVEDLKEMTSISSRKRGKRRYFWEYSEQLTPSQQERILRPSEWNRDTLPSNMYQKNGLHHGKYAVKKSRRTDVEDLTPNPKKLLQIGNELRKLNKVISDLTPVSELPLTARPRSRKEKNKLASRACRLKKKAQYEANKVKLWGLNTEYDNLLFVINSIKQDIVNRVQNPREEREPSMGQKLEILIKDTLGLPVAGQTSEFVNQVLGKTAEGNPTGGLVGLRIPASKV.

A disordered region spans residues 308–414 (SPGLVATAES…FSEPGYENDS (107 aa)). Low complexity predominate over residues 317 to 329 (SGSLSASTSVSDS). The segment covering 356 to 371 (EDDEDDEDEFDDEDHD) has biased composition (acidic residues). Residues 372–381 (EGFGSEHELS) show a composition bias toward basic and acidic residues. Over residues 382–402 (ENEEEEEEEEDYEDDRDDDIS) the composition is skewed to acidic residues. The region spanning 522-585 (TARPRSRKEK…VNRVQNPREE (64 aa)) is the bZIP domain. The tract at residues 524–533 (RPRSRKEKNK) is basic motif. The tract at residues 534–541 (LASRACRL) is leucine-zipper.

The protein belongs to the bZIP family. CREBRF subfamily. In terms of assembly, interacts (via leucine-zipper domain) with CREB3 (via leucine-zipper domain); the interaction promotes CREB3 degradation. Post-translationally, probably degraded by the proteasome. As to expression, highly expressed in intestin, testis, heart and kidney, weakly in brain adipose, colon, liver, lung and skeletal.

Its subcellular location is the nucleus. Acts as a negative regulator of the endoplasmic reticulum stress response or unfolded protein response (UPR). Represses the transcriptional activity of CREB3 during the UPR. Recruits CREB3 into nuclear foci. This Mus musculus (Mouse) protein is CREB3 regulatory factor (Crebrf).